A 303-amino-acid polypeptide reads, in one-letter code: Ribosomal RNA small subunit methyltransferase H (303 aa).

S-adenosyl-L-methionine contacts are provided by residues 33-35 (GGH), Asp-52, Phe-79, Asp-97, and Gln-104.

The protein belongs to the methyltransferase superfamily. RsmH family.

The protein localises to the cytoplasm. The catalysed reaction is cytidine(1402) in 16S rRNA + S-adenosyl-L-methionine = N(4)-methylcytidine(1402) in 16S rRNA + S-adenosyl-L-homocysteine + H(+). Its function is as follows. Specifically methylates the N4 position of cytidine in position 1402 (C1402) of 16S rRNA. The chain is Ribosomal RNA small subunit methyltransferase H from Wolinella succinogenes (strain ATCC 29543 / DSM 1740 / CCUG 13145 / JCM 31913 / LMG 7466 / NCTC 11488 / FDC 602W) (Vibrio succinogenes).